The chain runs to 184 residues: Antigen Sm21.7 (184 aa).

An EF-hand domain is found at 37–72 (LDMKQVNEWIALFDVDKDQKITFEEFCRGLGLKQNE). Residues Asp-50, Asp-52, Asp-54, Lys-56, and Glu-61 each contribute to the Ca(2+) site.

This chain is Antigen Sm21.7 (SM21.7), found in Schistosoma mansoni (Blood fluke).